A 319-amino-acid chain; its full sequence is Acetyl-coenzyme A carboxylase carboxyl transferase subunit alpha (319 aa).

Residues 35-296 (NIDEEVHRLR…KAQLLADLAD (262 aa)) enclose the CoA carboxyltransferase C-terminal domain.

It belongs to the AccA family. In terms of assembly, acetyl-CoA carboxylase is a heterohexamer composed of biotin carboxyl carrier protein (AccB), biotin carboxylase (AccC) and two subunits each of ACCase subunit alpha (AccA) and ACCase subunit beta (AccD).

It localises to the cytoplasm. The catalysed reaction is N(6)-carboxybiotinyl-L-lysyl-[protein] + acetyl-CoA = N(6)-biotinyl-L-lysyl-[protein] + malonyl-CoA. Its pathway is lipid metabolism; malonyl-CoA biosynthesis; malonyl-CoA from acetyl-CoA: step 1/1. In terms of biological role, component of the acetyl coenzyme A carboxylase (ACC) complex. First, biotin carboxylase catalyzes the carboxylation of biotin on its carrier protein (BCCP) and then the CO(2) group is transferred by the carboxyltransferase to acetyl-CoA to form malonyl-CoA. The sequence is that of Acetyl-coenzyme A carboxylase carboxyl transferase subunit alpha from Shigella sonnei (strain Ss046).